Consider the following 398-residue polypeptide: Histidinol dehydrogenase (398 aa).

The NAD(+) site is built by Tyr-114, Gln-176, and Asn-199. Residues Thr-222, Gln-244, and His-247 each coordinate substrate. Zn(2+) contacts are provided by Gln-244 and His-247. Active-site proton acceptor residues include Glu-298 and His-299. The substrate site is built by His-299, Asp-331, Glu-384, and His-389. Residue Asp-331 coordinates Zn(2+). His-389 is a binding site for Zn(2+).

This sequence belongs to the histidinol dehydrogenase family. The cofactor is Zn(2+).

The catalysed reaction is L-histidinol + 2 NAD(+) + H2O = L-histidine + 2 NADH + 3 H(+). It participates in amino-acid biosynthesis; L-histidine biosynthesis; L-histidine from 5-phospho-alpha-D-ribose 1-diphosphate: step 9/9. In terms of biological role, catalyzes the sequential NAD-dependent oxidations of L-histidinol to L-histidinaldehyde and then to L-histidine. This chain is Histidinol dehydrogenase (hisD), found in Saccharolobus solfataricus (strain ATCC 35092 / DSM 1617 / JCM 11322 / P2) (Sulfolobus solfataricus).